The primary structure comprises 327 residues: Lipid phosphate phosphatase 1 (327 aa).

The next 6 membrane-spanning stretches (helical) occupy residues Trp-51–Tyr-71, Ile-93–Leu-113, Val-118–Ile-138, Phe-187–Ser-207, Gly-217–Ile-237, and Trp-244–Cys-264.

Belongs to the PA-phosphatase related phosphoesterase family. Strongly expressed in leaves, moderately in roots, weakly in floral hamps and flower buds, and not detected in adult flowers and seedpods.

Its subcellular location is the membrane. PA phosphatase activity inhibited by N-ethylmaleimide with an IC(50) value of 10 mM. Its function is as follows. Plays a general role in cellular responses to stress, may be by attenuating the signal produced by phospholipases. Exhibits both diacylglycerol pyrophosphate (DGPP) phosphatase and phosphatidate (PA) phosphatase activities. Substrate preference is diacylglycerol pyrophosphate &gt; phosphatidate. The sequence is that of Lipid phosphate phosphatase 1 (LPP1) from Arabidopsis thaliana (Mouse-ear cress).